The sequence spans 181 residues: Ribulose bisphosphate carboxylase small subunit, chloroplastic 2 (181 aa).

The transit peptide at 1–54 directs the protein to the chloroplast; sequence MASSMLSSAAVVTSPAQATMVAPFTGLKSSAAFPVTRKANNDITSIASNGGRVS.

Belongs to the RuBisCO small chain family. As to quaternary structure, heterohexadecamer of 8 large and 8 small subunits.

It is found in the plastid. The protein localises to the chloroplast. Its function is as follows. RuBisCO catalyzes two reactions: the carboxylation of D-ribulose 1,5-bisphosphate, the primary event in carbon dioxide fixation, as well as the oxidative fragmentation of the pentose substrate. Both reactions occur simultaneously and in competition at the same active site. Although the small subunit is not catalytic it is essential for maximal activity. In Brassica napus (Rape), this protein is Ribulose bisphosphate carboxylase small subunit, chloroplastic 2.